We begin with the raw amino-acid sequence, 451 residues long: uncharacterized protein (451 aa).

A run of 5 helical transmembrane segments spans residues 11 to 31 (VLLK…YIDL), 56 to 76 (IQIY…SIGT), 151 to 171 (IIGI…NIYL), 175 to 195 (FWLI…LIIF), and 207 to 227 (VYSV…TIKI). The tract at residues 250-300 (TKSNNNNNNNNNNKQDDNIIYDTDSSFNGQSSSSSSSSSSSSSSSSSATTT) is disordered. Composition is skewed to low complexity over residues 253–262 (NNNNNNNNNN) and 280–300 (SSSS…ATTT). Transmembrane regions (helical) follow at residues 392–412 (FVGV…SDYS) and 413–433 (LLTI…LTYL).

The protein resides in the membrane. This is an uncharacterized protein from Dictyostelium discoideum (Social amoeba).